An 826-amino-acid polypeptide reads, in one-letter code: Glycerol-3-phosphate acyltransferase 1, mitochondrial (826 aa).

The Cytoplasmic segment spans residues 1–87; that stretch reads MDESALTLGT…FFNPSIPSLG (87 aa). The important for mitochondrial localization stretch occupies residues 80 to 120; it reads NPSIPSLGLRNVIYINETHTRHRGWLARRLSYVLFIQERDV. The stretch at 88–118 is an intramembrane region; sequence LRNVIYINETHTRHRGWLARRLSYVLFIQER. The Cytoplasmic segment spans residues 119–826; sequence DVHKGMFATN…LEYILSFVVL (708 aa). Residues 230–235 carry the HXXXXD motif motif; sequence HRSHID. The CoA site is built by Arg278, Arg279, Lys288, Arg293, and Arg328. Position 380 is a phosphoserine (Ser380). A CoA-binding site is contributed by Arg462. Phosphoserine is present on residues Ser686 and Ser693. An N6-acetyllysine mark is found at Lys778 and Lys782.

It belongs to the GPAT/DAPAT family.

It localises to the mitochondrion outer membrane. It carries out the reaction sn-glycerol 3-phosphate + an acyl-CoA = a 1-acyl-sn-glycero-3-phosphate + CoA. The catalysed reaction is (9Z,12Z)-octadecadienoyl-CoA + sn-glycerol 3-phosphate = 1-(9Z,12Z)-octadecadienoyl-sn-glycero-3-phosphate + CoA. It catalyses the reaction sn-glycerol 3-phosphate + (9Z)-octadecenoyl-CoA = 1-(9Z-octadecenoyl)-sn-glycero-3-phosphate + CoA. The enzyme catalyses sn-glycerol 3-phosphate + octadecanoyl-CoA = 1-octadecanoyl-sn-glycero-3-phosphate + CoA. It carries out the reaction sn-glycerol 3-phosphate + hexadecanoyl-CoA = 1-hexadecanoyl-sn-glycero-3-phosphate + CoA. The catalysed reaction is dodecanoyl-CoA + sn-glycerol 3-phosphate = 1-dodecanoyl-sn-glycerol 3-phosphate + CoA. It catalyses the reaction 1-acyl-sn-glycero-3-phospho-(1'-sn-glycerol) + an acyl-CoA = a 1,2-diacyl-sn-glycero-3-phospho-(1'-sn-glycerol) + CoA. It participates in phospholipid metabolism; CDP-diacylglycerol biosynthesis; CDP-diacylglycerol from sn-glycerol 3-phosphate: step 1/3. Mitochondrial membrane protein that catalyzes the essential first step of biosynthesis of glycerolipids such as triglycerides, phosphatidic acids and lysophosphatidic acids. Esterifies acyl-group from acyl-coenzyme A (acyl-CoA) to the sn-1 position of glycerol-3-phosphate, to produce lysophosphatidic acid. Has a narrow hydrophobic binding cleft that selects for a linear acyl chain. Catalytic activity is higher for substrates with a 16-carbon acyl chain. This is Glycerol-3-phosphate acyltransferase 1, mitochondrial from Sus scrofa (Pig).